Reading from the N-terminus, the 84-residue chain is Omega-conotoxin-like ArMKLT1-02 (84 aa).

Positions 1 to 22 (MKVTCMMIVAVLFLTAWTFVTA) are cleaved as a signal peptide. The propeptide occupies 23–51 (DDSISALEDLFAKAHDKMENSEASPLNER). Disulfide bonds link Cys-53/Cys-71, Cys-60/Cys-75, and Cys-70/Cys-79.

Belongs to the conotoxin O1 superfamily. As to expression, expressed by the venom duct.

It localises to the secreted. Functionally, omega-conotoxins act at presynaptic membranes, they bind and block voltage-gated calcium channels (Cav). This is Omega-conotoxin-like ArMKLT1-02 from Conus arenatus (Sand-dusted cone).